Consider the following 218-residue polypeptide: Enhancer of split M2 protein (218 aa).

The span at methionine 1–lysine 25 shows a compositional bias: low complexity. Disordered regions lie at residues methionine 1–methionine 30, asparagine 64–proline 86, and glycine 137–alanine 164. Residues serine 147–serine 163 show a composition bias toward low complexity.

Part of the Notch signaling pathway. The protein is Enhancer of split M2 protein of Drosophila melanogaster (Fruit fly).